Reading from the N-terminus, the 635-residue chain is DNA-directed RNA polymerase subunit gamma (635 aa).

Positions 74, 76, 89, and 92 each coordinate Zn(2+). Positions 471, 473, and 475 each coordinate Mg(2+).

The protein belongs to the RNA polymerase beta' chain family. RpoC1 subfamily. In cyanobacteria the RNAP catalytic core is composed of 2 alpha, 1 beta, 1 beta', 1 gamma and 1 omega subunit. When a sigma factor is associated with the core the holoenzyme is formed, which can initiate transcription. Requires Mg(2+) as cofactor. Zn(2+) serves as cofactor.

The enzyme catalyses RNA(n) + a ribonucleoside 5'-triphosphate = RNA(n+1) + diphosphate. DNA-dependent RNA polymerase catalyzes the transcription of DNA into RNA using the four ribonucleoside triphosphates as substrates. This is DNA-directed RNA polymerase subunit gamma from Prochlorococcus marinus (strain NATL2A).